We begin with the raw amino-acid sequence, 119 residues long: Large ribosomal subunit protein bL20 (119 aa).

Belongs to the bacterial ribosomal protein bL20 family.

Functionally, binds directly to 23S ribosomal RNA and is necessary for the in vitro assembly process of the 50S ribosomal subunit. It is not involved in the protein synthesizing functions of that subunit. This is Large ribosomal subunit protein bL20 from Syntrophus aciditrophicus (strain SB).